We begin with the raw amino-acid sequence, 415 residues long: Serine/threonine transporter SstT (415 aa).

A run of 8 helical transmembrane segments spans residues 23 to 43 (ILIG…AAIA), 47 to 67 (LGTL…LMLV), 85 to 105 (ILFL…LFSF), 144 to 164 (ALLN…GFAL), 181 to 201 (AVTF…FGLV), 220 to 240 (LLVL…LLVF), 293 to 313 (IPLG…VLTL), and 333 to 353 (VVAS…LLLI).

This sequence belongs to the dicarboxylate/amino acid:cation symporter (DAACS) (TC 2.A.23) family.

It localises to the cell inner membrane. It carries out the reaction L-serine(in) + Na(+)(in) = L-serine(out) + Na(+)(out). The enzyme catalyses L-threonine(in) + Na(+)(in) = L-threonine(out) + Na(+)(out). Its function is as follows. Involved in the import of serine and threonine into the cell, with the concomitant import of sodium (symport system). The protein is Serine/threonine transporter SstT of Klebsiella pneumoniae (strain 342).